A 318-amino-acid polypeptide reads, in one-letter code: NADH-ubiquinone oxidoreductase chain 1 (318 aa).

Transmembrane regions (helical) follow at residues 2-22 (FFIN…FLTL), 70-90 (MFIL…IPLP), 100-120 (LGVL…LWSG), 147-167 (AIIL…TLII), 171-191 (HMWL…STLA), 223-243 (FFLA…ILFF), 253-273 (ELYS…FLWI), and 294-314 (LPLT…TASI).

Belongs to the complex I subunit 1 family. As to quaternary structure, core subunit of respiratory chain NADH dehydrogenase (Complex I) which is composed of 45 different subunits.

It is found in the mitochondrion inner membrane. The catalysed reaction is a ubiquinone + NADH + 5 H(+)(in) = a ubiquinol + NAD(+) + 4 H(+)(out). In terms of biological role, core subunit of the mitochondrial membrane respiratory chain NADH dehydrogenase (Complex I) which catalyzes electron transfer from NADH through the respiratory chain, using ubiquinone as an electron acceptor. Essential for the catalytic activity and assembly of complex I. The sequence is that of NADH-ubiquinone oxidoreductase chain 1 (MT-ND1) from Canis lupus familiaris (Dog).